A 794-amino-acid polypeptide reads, in one-letter code: Zinc finger protein 148 (794 aa).

Lys-6 is covalently cross-linked (Glycyl lysine isopeptide (Lys-Gly) (interchain with G-Cter in SUMO2)). Ser-51 carries the phosphoserine modification. Residues Lys-88, Lys-115, and Lys-132 each participate in a glycyl lysine isopeptide (Lys-Gly) (interchain with G-Cter in SUMO2) cross-link. The C2H2-type 1 zinc-finger motif lies at 171–193 (HVCEHCNAAFRTNYHLQRHVFIH). A Phosphothreonine modification is found at Thr-194. 2 consecutive C2H2-type zinc fingers follow at residues 199 to 221 (FQCS…EKIH) and 227 to 249 (FRCD…KRTH). Ser-250 carries the phosphoserine modification. Residues 255 to 278 (YQCEYCLQYFSRTDRVLKHKRMCH) form a C2H2-type 4 zinc finger. Residue Lys-291 forms a Glycyl lysine isopeptide (Lys-Gly) (interchain with G-Cter in SUMO2) linkage. A disordered region spans residues 298–336 (EEDSGFSTSPKDNSLPKKKRQKTEKKSSGMDKESVLDKS). 2 positions are modified to phosphoserine: Ser-301 and Ser-306. Lys-308 is covalently cross-linked (Glycyl lysine isopeptide (Lys-Gly) (interchain with G-Cter in SUMO2)). The segment covering 321–336 (EKKSSGMDKESVLDKS) has biased composition (basic and acidic residues). Lys-356 is covalently cross-linked (Glycyl lysine isopeptide (Lys-Gly) (interchain with G-Cter in SUMO1); alternate). A Glycyl lysine isopeptide (Lys-Gly) (interchain with G-Cter in SUMO2); alternate cross-link involves residue Lys-356. Residue Lys-402 forms a Glycyl lysine isopeptide (Lys-Gly) (interchain with G-Cter in SUMO2) linkage. Ser-412 carries the post-translational modification Phosphoserine. Residues Lys-421 and Lys-424 each participate in a glycyl lysine isopeptide (Lys-Gly) (interchain with G-Cter in SUMO2) cross-link. Over residues 574–588 (NSSDVPEVTQSENVG) the composition is skewed to polar residues. The disordered stretch occupies residues 574-599 (NSSDVPEVTQSENVGSSSQASSSDKA). N6-acetyllysine is present on Lys-607. Residues Ser-665 and Ser-784 each carry the phosphoserine modification.

This sequence belongs to the krueppel C2H2-type zinc-finger protein family. As to quaternary structure, interacts with HNRNPDL. Interacts with the 5FMC complex; the interaction requires association with CHTOP. Interacts with CAVIN1. Sumoylated with SUMO2. Desumoylated by SENP3, resulting in the stimulation of transcription of its target genes. Strong expression detected in brain, lung, liver and kidney, with lower levels detected in spleen, skeletal muscle, testis and heart.

The protein resides in the nucleus. Functionally, involved in transcriptional regulation. Represses the transcription of a number of genes including gastrin, stromelysin and enolase. Binds to the G-rich box in the enhancer region of these genes. This is Zinc finger protein 148 (Znf148) from Mus musculus (Mouse).